Reading from the N-terminus, the 160-residue chain is Large ribosomal subunit protein eL29 (160 aa).

A compositionally biased stretch (basic residues) spans 1-26 (MAKSKNHTTHNQSRKWHRNGIKKPRS). Positions 1 to 32 (MAKSKNHTTHNQSRKWHRNGIKKPRSQRYESL) are disordered. Lysine 5 carries the post-translational modification N6-methyllysine. Serine 31 bears the Phosphoserine mark. The residue at position 33 (lysine 33) is an N6-acetyllysine. The disordered stretch occupies residues 119 to 160 (CRPKSQAKAQSKAKATAGGTAAAPVPPASAPKGAQAPTKAPQ). Over residues 121–141 (PKSQAKAQSKAKATAGGTAAA) the composition is skewed to low complexity.

It belongs to the eukaryotic ribosomal protein eL29 family. Component of the large ribosomal subunit.

The protein resides in the cytoplasm. In terms of biological role, component of the large ribosomal subunit. The ribosome is a large ribonucleoprotein complex responsible for the synthesis of proteins in the cell. The chain is Large ribosomal subunit protein eL29 (RPL29) from Sus scrofa (Pig).